The chain runs to 423 residues: MSSLAEIASRPENLELLAEGKTKQIFDIKGEKDYVLIRSKDSLTAFNAVRKNELEGKSRIASKTTSNVFEYLQLLGLPTHFEKSISETEFVARKCTMIPIEWVARRVATGSFLKRNPGVKEGFRFNDLKLETFFKDDANDDPQWTDEQIVSNGLMIDHLKIGREEISLMKKMTKLVFRALEKGWALSNSALIDMKIEFGVTVEGEILLADVIDNDSWRVWPENDRRLQLDKQVYRDMKEVTEEGLALVLKNYTKVMDITATFSKHQQKCHVLVIMGSGSDGVFARKISDEAKKFGLETTLKVSSAHKTTSDTLEVIADFEESGVPTVVIAVAGRSNGLGPVIAGNSSLPVINCPPPSESTSLDIWSSLRMPNGIGCTTVLDPSEAALAAAKILASHNHIVFGKVLTAQLKNQINIYNANRKLE.

The SAICAR synthetase stretch occupies residues 1-263; that stretch reads MSSLAEIASR…KVMDITATFS (263 aa). Positions 264 to 423 are AIR carboxylase; that stretch reads KHQQKCHVLV…NIYNANRKLE (160 aa).

This sequence in the N-terminal section; belongs to the SAICAR synthetase family. In the C-terminal section; belongs to the AIR carboxylase family. Class II subfamily.

The catalysed reaction is 5-amino-1-(5-phospho-D-ribosyl)imidazole-4-carboxylate + L-aspartate + ATP = (2S)-2-[5-amino-1-(5-phospho-beta-D-ribosyl)imidazole-4-carboxamido]succinate + ADP + phosphate + 2 H(+). It carries out the reaction 5-amino-1-(5-phospho-D-ribosyl)imidazole-4-carboxylate + H(+) = 5-amino-1-(5-phospho-beta-D-ribosyl)imidazole + CO2. It participates in purine metabolism; IMP biosynthesis via de novo pathway; 5-amino-1-(5-phospho-D-ribosyl)imidazole-4-carboxamide from 5-amino-1-(5-phospho-D-ribosyl)imidazole-4-carboxylate: step 1/2. Its pathway is purine metabolism; IMP biosynthesis via de novo pathway; 5-amino-1-(5-phospho-D-ribosyl)imidazole-4-carboxylate from 5-amino-1-(5-phospho-D-ribosyl)imidazole (carboxylase route): step 1/1. The protein is Probable multifunctional protein ADE2 of Caenorhabditis elegans.